Consider the following 557-residue polypeptide: Urocanate hydratase (557 aa).

Positions 1 to 20 are disordered; the sequence is MSNPRHNEREVRSPRGDELN. NAD(+) is bound by residues 52–53, Q130, 176–178, E196, R201, 242–243, 263–267, 273–274, and Y322; these read GG, GMG, NA, QTSAH, and YL. C410 is a catalytic residue. G492 contacts NAD(+).

Belongs to the urocanase family. NAD(+) is required as a cofactor.

Its subcellular location is the cytoplasm. The enzyme catalyses 4-imidazolone-5-propanoate = trans-urocanate + H2O. It functions in the pathway amino-acid degradation; L-histidine degradation into L-glutamate; N-formimidoyl-L-glutamate from L-histidine: step 2/3. Functionally, catalyzes the conversion of urocanate to 4-imidazolone-5-propionate. The chain is Urocanate hydratase from Brucella canis (strain ATCC 23365 / NCTC 10854 / RM-666).